The sequence spans 86 residues: Tryptophan-containing weak neurotoxin (86 aa).

An N-terminal signal peptide occupies residues 1-21; that stretch reads MKTLLLTLVVVTIVCLDLGYT. 5 disulfide bridges follow: C24/C45, C27/C32, C38/C63, C67/C78, and C79/C84.

The protein belongs to the three-finger toxin family. Ancestral subfamily. Orphan group II sub-subfamily. As to quaternary structure, monomer in solution. Post-translationally, the disulfide bond Cys-27-Cys-32 is probably not needed for efficient interaction of the toxin with the target receptor (Torpedo muscle or alpha-7/CHRNA7 nAChR). As to expression, expressed by the venom gland.

It is found in the secreted. Functionally, neurotoxin that irreversibly inhibits nicotinic acetylcholine receptors (nAChR) and allosterically interacts with muscarinic acetylcholine receptors (mAChR). The loop II is involved in the interaction of this toxin with nAChR and mAChR. On nAChR, it acts as a competitive antagonist (muscle-type and alpha-7/CHRNA7) with IC(50) values in the micromolar range. On mAChR, in presence of ACh, it partially inhibits the effect of acetylcholine (ACh) (allosteric antagonist), whereas in the absence of ACh, it activates the receptor (allosteric agonist). It also shows a very weak inhibition of GABA(A) receptor composed of alpha-1-beta-3-gamma-2 (GABRA1 and GABRB3 and GABRG2) subunits (10 uM inhibit 31% current). In vivo, is nonlethal to mice at concentrations up to 20 mg/kg, but exerts a myorelaxant effect, induces a dose-dependent decrease in blood pressure and an increase in heart rate in mice and rats. This is Tryptophan-containing weak neurotoxin from Naja kaouthia (Monocled cobra).